The sequence spans 137 residues: DNA-binding protein H-NS (137 aa).

Residues 112–117 (QGRTPA) mediate DNA binding.

The protein belongs to the histone-like protein H-NS family. Homodimer that oligomerizes on DNA into higher-order complexes that form bridges between disparate regions of DNA compacting it. Interacts with Hha, YdgT and StpA.

It is found in the cytoplasm. Its subcellular location is the nucleoid. A DNA-binding protein implicated in transcriptional repression and chromosome organization and compaction. Binds nucleation sites in AT-rich DNA and bridges them, forming higher-order nucleoprotein complexes and condensing the chromosome. As many horizontally transferred genes are AT-rich, it plays a central role in silencing foreign genes. A subset of genes are repressed by H-NS in association with other proteins. The sequence is that of DNA-binding protein H-NS (hns) from Salmonella paratyphi A (strain ATCC 9150 / SARB42).